The sequence spans 494 residues: Putative bifunctional dihydrofolate reductase-thymidylate synthase (494 aa).

Positions 1–167 (MGIGKDGTLP…IKHSFISFVR (167 aa)) constitute a DHFR domain. 2 to 8 (GIGKDGT) is a binding site for NADP(+). Substrate is bound at residue Asp16. NADP(+) is bound by residues 40-42 (RKT) and 61-64 (LTRS). Residue Ile103 coordinates substrate. NADP(+) is bound at residue 104-111 (GGGEILRQ). Thr124 lines the substrate pocket. The interval 170 to 494 (KSIAEANDSS…HHKIEMKMAV (325 aa)) is thymidylate synthase. Position 231 (Arg231) interacts with dUMP. Cys376 is a catalytic residue. Residues His377, 395 to 399 (QRSAD), Asn407, and 437 to 439 (HVY) contribute to the dUMP site.

It in the N-terminal section; belongs to the dihydrofolate reductase family. The protein in the C-terminal section; belongs to the thymidylate synthase family.

It catalyses the reaction (6S)-5,6,7,8-tetrahydrofolate + NADP(+) = 7,8-dihydrofolate + NADPH + H(+). It carries out the reaction dUMP + (6R)-5,10-methylene-5,6,7,8-tetrahydrofolate = 7,8-dihydrofolate + dTMP. Its pathway is cofactor biosynthesis; tetrahydrofolate biosynthesis; 5,6,7,8-tetrahydrofolate from 7,8-dihydrofolate: step 1/1. Bifunctional enzyme. Involved in de novo dTMP biosynthesis. Key enzyme in folate metabolism. Can play two different roles depending on the source of dihydrofolate: de novo synthesis of tetrahydrofolate or recycling of the dihydrofolate released as one of the end products of the TS catalyzed reaction. Catalyzes an essential reaction for de novo glycine and purine synthesis, DNA precursor synthesis, and for the conversion of dUMP to dTMP. The sequence is that of Putative bifunctional dihydrofolate reductase-thymidylate synthase from Oryza sativa subsp. japonica (Rice).